The chain runs to 355 residues: Probable aldo-keto reductase 3 (355 aa).

Residue Tyr70 is the Proton donor of the active site. His138 is a binding site for substrate. 217 to 227 (SPLGRGFFSSG) is an NADP(+) binding site.

This sequence belongs to the aldo/keto reductase family.

This chain is Probable aldo-keto reductase 3, found in Oryza sativa subsp. japonica (Rice).